The primary structure comprises 21 residues: Nitrilase (21 aa).

This sequence belongs to the carbon-nitrogen hydrolase superfamily. Nitrilase family.

The enzyme catalyses a nitrile + 2 H2O = a carboxylate + NH4(+). Acts on many kinds of nitrile compounds such as aliphatic, aromatic, and heterocyclic mononitriles or dinitriles. Prefers S-(-)-2-(4'-isobutylphenyl)-propionitrile to R-(+)-2-(4'-isobutylphenyl)-propionitrile as the substrate. The polypeptide is Nitrilase (Acinetobacter sp. (strain AK226)).